We begin with the raw amino-acid sequence, 246 residues long: Octanoyltransferase (246 aa).

Residues 46–234 (GTAGEMVWLV…AFEEVFGAAE (189 aa)) enclose the BPL/LPL catalytic domain. Substrate contacts are provided by residues 85–92 (RGGEYTYH), 165–167 (AIG), and 178–180 (GIA). The active-site Acyl-thioester intermediate is C196.

The protein belongs to the LipB family.

The protein resides in the cytoplasm. It carries out the reaction octanoyl-[ACP] + L-lysyl-[protein] = N(6)-octanoyl-L-lysyl-[protein] + holo-[ACP] + H(+). It participates in protein modification; protein lipoylation via endogenous pathway; protein N(6)-(lipoyl)lysine from octanoyl-[acyl-carrier-protein]: step 1/2. In terms of biological role, catalyzes the transfer of endogenously produced octanoic acid from octanoyl-acyl-carrier-protein onto the lipoyl domains of lipoate-dependent enzymes. Lipoyl-ACP can also act as a substrate although octanoyl-ACP is likely to be the physiological substrate. In Chelativorans sp. (strain BNC1), this protein is Octanoyltransferase.